Consider the following 161-residue polypeptide: S-ribosylhomocysteine lyase (161 aa).

Fe cation-binding residues include histidine 53, histidine 57, and cysteine 124.

It belongs to the LuxS family. In terms of assembly, homodimer. It depends on Fe cation as a cofactor.

The enzyme catalyses S-(5-deoxy-D-ribos-5-yl)-L-homocysteine = (S)-4,5-dihydroxypentane-2,3-dione + L-homocysteine. Functionally, involved in the synthesis of autoinducer 2 (AI-2) which is secreted by bacteria and is used to communicate both the cell density and the metabolic potential of the environment. The regulation of gene expression in response to changes in cell density is called quorum sensing. Catalyzes the transformation of S-ribosylhomocysteine (RHC) to homocysteine (HC) and 4,5-dihydroxy-2,3-pentadione (DPD). The protein is S-ribosylhomocysteine lyase of Phocaeicola vulgatus (strain ATCC 8482 / DSM 1447 / JCM 5826 / CCUG 4940 / NBRC 14291 / NCTC 11154) (Bacteroides vulgatus).